Consider the following 293-residue polypeptide: Ribosomal protein L11 methyltransferase (293 aa).

S-adenosyl-L-methionine-binding residues include Thr-145, Gly-166, Asp-188, and Asn-230.

It belongs to the methyltransferase superfamily. PrmA family.

It localises to the cytoplasm. The catalysed reaction is L-lysyl-[protein] + 3 S-adenosyl-L-methionine = N(6),N(6),N(6)-trimethyl-L-lysyl-[protein] + 3 S-adenosyl-L-homocysteine + 3 H(+). Its function is as follows. Methylates ribosomal protein L11. The polypeptide is Ribosomal protein L11 methyltransferase (Yersinia pseudotuberculosis serotype O:3 (strain YPIII)).